Consider the following 533-residue polypeptide: Methyl-accepting chemotaxis protein IV (533 aa).

Residues Met1–Arg6 are Cytoplasmic-facing. A helical transmembrane segment spans residues Ile7–Phe33. Topologically, residues Arg34–Ser188 are periplasmic. Residues Ala189 to Trp209 form a helical membrane-spanning segment. Over Thr210–Ser533 the chain is Cytoplasmic. One can recognise an HAMP domain in the interval Lys212–Ser264. Residues Gly269 to Ala498 enclose the Methyl-accepting transducer domain. 3 positions are modified to glutamate methyl ester (Gln): Gln293, Gln300, and Gln307. At Glu489 the chain carries Glutamate methyl ester (Glu).

The protein belongs to the methyl-accepting chemotaxis (MCP) protein family.

The protein localises to the cell inner membrane. Its function is as follows. Mediates taxis toward dipeptides via an interaction with the periplasmic dipeptide-binding protein. Chemotactic-signal transducers respond to changes in the concentration of attractants and repellents in the environment, transduce a signal from the outside to the inside of the cell, and facilitate sensory adaptation through the variation of the level of methylation. Attractants increase the level of methylation while repellents decrease the level of methylation, the methyl groups are added by the methyltransferase CheR and removed by the methylesterase CheB. The protein is Methyl-accepting chemotaxis protein IV (tap) of Escherichia coli (strain K12).